A 592-amino-acid polypeptide reads, in one-letter code: Multidrug transporter AQR1 (592 aa).

The interval 1–77 (MVESGPHSIN…EISSTHSQDA (77 aa)) is disordered. Residues 99-119 (WCMVALLTACGFWSSLGSPIY) traverse the membrane as a helical segment. The N-linked (GlcNAc...) asparagine glycan is linked to Asn138. Transmembrane regions (helical) follow at residues 139–159 (ITVV…GGLA), 166–186 (PVLL…ACAP), 188–208 (YGVI…SIAI), 231–251 (GFVL…AAAW), and 255–275 (AIFW…FALL). Asn285 carries an N-linked (GlcNAc...) asparagine glycan. 6 helical membrane-spanning segments follow: residues 340-360 (IFLS…MLSA), 374-394 (LTII…GSFA), 432-452 (LQSV…FGWS), 459-479 (IPSI…TLSA), 497-517 (SCFN…FAKM), and 523-543 (VGGT…LMFI).

It belongs to the major facilitator superfamily. CAR1 family.

It localises to the cell membrane. Functionally, multidrug transporter acts as a determinant of resistance to acetic acid, flucytosine and clotrimazole, these 3 compounds acting synergistically against the pathogen. Reduces the intracellular accumulation of the antifungal agents flucytosine and, to a moderate extent, of clotrimazole. Its role in acetic acid resistance may be indirect, presumably through the transport of a still unidentified physiological substrate. The protein is Multidrug transporter AQR1 of Candida glabrata (strain ATCC 2001 / BCRC 20586 / JCM 3761 / NBRC 0622 / NRRL Y-65 / CBS 138) (Yeast).